The chain runs to 658 residues: Endoglucanase 3 (658 aa).

The signal sequence occupies residues 1 to 23 (MQLKNFYPKMSVLGIATVMALTA). A lipid anchor (N-palmitoyl cysteine) is attached at C24. C24 carries S-diacylglycerol cysteine lipidation. Residues 24-265 (CGDENTQALF…TDSLFIDNIY (242 aa)) constitute a propeptide that is removed on maturation. Residues 42–83 (ENQVPVSSSDMSPTSSDAVIDPTSSSAAVVDPSTLPAEGPIT) are disordered. Positions 45–58 (VPVSSSDMSPTSSD) are enriched in low complexity. The region spanning 87 to 277 (GLGTLVDDFE…DSSEVEKDQP (191 aa)) is the CBM11 domain. E448 (proton donor) is an active-site residue. Residue E597 is the Nucleophile of the active site.

The protein belongs to the glycosyl hydrolase 5 (cellulase A) family. Monomer. In terms of processing, may be a lipoprotein and may be glycosylated.

The protein localises to the membrane. It catalyses the reaction Endohydrolysis of (1-&gt;4)-beta-D-glucosidic linkages in cellulose, lichenin and cereal beta-D-glucans.. In terms of biological role, exhibits both endoglucanase and cellobiosidase activities. The chain is Endoglucanase 3 (cel-3) from Fibrobacter succinogenes (strain ATCC 19169 / S85).